The following is a 181-amino-acid chain: Probable integrase/recombinase YoeC (181 aa).

The Tyr recombinase domain occupies 3 to 176 (IVQPIRSLEK…DEDTTRAAYK (174 aa)). Active-site residues include arginine 40, lysine 64, histidine 128, arginine 131, and histidine 154. The active-site O-(3'-phospho-DNA)-tyrosine intermediate is the tyrosine 163.

This sequence belongs to the 'phage' integrase family.

In Bacillus subtilis (strain 168), this protein is Probable integrase/recombinase YoeC (yoeC).